The sequence spans 237 residues: Large ribosomal subunit protein uL1 (237 aa).

Belongs to the universal ribosomal protein uL1 family. In terms of assembly, part of the 50S ribosomal subunit.

Functionally, binds directly to 23S rRNA. The L1 stalk is quite mobile in the ribosome, and is involved in E site tRNA release. In terms of biological role, protein L1 is also a translational repressor protein, it controls the translation of the L11 operon by binding to its mRNA. The sequence is that of Large ribosomal subunit protein uL1 from Dehalococcoides mccartyi (strain ATCC BAA-2100 / JCM 16839 / KCTC 5957 / BAV1).